The primary structure comprises 150 residues: Protein ADM2 (150 aa).

Residues 1 to 25 (MAQLLMVTVTLGCISLLYLLPGTLS) form the signal peptide. The propeptide occupies 26-100 (GSLGKGLRHS…HPGPQRPTGS (75 aa)). Positions 28-102 (LGKGLRHSRP…GPQRPTGSRR (75 aa)) are disordered. Cysteines 112 and 117 form a disulfide. Y149 bears the Tyrosine amide mark.

Belongs to the adrenomedullin family. As to expression, high expression detected in the submaxillary gland, kidney, stomach, and mesentery, followed by the pituitary, lung, pancreas, intestines, spleen, thymus and ovary. Expressed mainly in the intermediate lobe of the pituitary, with sporadic in the anterior lobe.

The protein resides in the secreted. Intermedin/ADM2 is a peptide hormone that plays a role as physiological regulator of gastrointestinal and cardiovascular bioactivities mediated by the CALCRL-RAMPs receptor complexes. Activates the cAMP-dependent pathway through interaction with CALCRL-RAMP3 receptor complex. The chain is Protein ADM2 from Mus musculus (Mouse).